The sequence spans 89 residues: MERVTLALLLLAGLTALEANDPFANKDDPFYYDWKNLQLSGLICGGLLAIAGIAAVLSGKCKCKSSQKQHSPVPEKAIPLITPGSATTC.

The first 20 residues, 1-20 (MERVTLALLLLAGLTALEAN), serve as a signal peptide directing secretion. Residues 21–38 (DPFANKDDPFYYDWKNLQ) lie on the Extracellular side of the membrane. The helical transmembrane segment at 39-59 (LSGLICGGLLAIAGIAAVLSG) threads the bilayer. At 60 to 89 (KCKCKSSQKQHSPVPEKAIPLITPGSATTC) the chain is on the cytoplasmic side.

It belongs to the FXYD family. As to quaternary structure, regulatory subunit of the sodium/potassium-transporting ATPase which is composed of a catalytic alpha subunit, a non-catalytic beta subunit and a regulatory subunit. The regulatory subunit, a member of the FXYD protein family, modulates the enzymatic activity in a tissue- and isoform-specific way by changing affinities of the Na+/K+-ATPase toward Na(+), K(+) or ATP.

It is found in the cell membrane. Its subcellular location is the basolateral cell membrane. Functionally, associates with and regulates the activity of the sodium/potassium-transporting ATPase (NKA) which catalyzes the hydrolysis of ATP coupled with the exchange of Na(+) and K(+) ions across the plasma membrane. Increases the apparent affinity of the transporter for Na(+) and increases NKA activity. In Homo sapiens (Human), this protein is FXYD domain-containing ion transport regulator 4 (FXYD4).